The following is a 463-amino-acid chain: Quinolone resistance protein NorB (463 aa).

14 consecutive transmembrane segments (helical) span residues 17-37 (IGIV…VNVV), 53-73 (IAVS…GGLA), 86-106 (IILN…LLLI), 107-127 (IGRL…LSII), 142-162 (YWSI…GAVA), 165-185 (LGWR…LFLI), 201-221 (FDIK…ILIT), 230-250 (SLLF…FIVL), 273-293 (TASN…NTFV), 299-319 (YSSL…LIMI), 334-354 (PMLI…LTFL), 357-377 (ILYV…LGIY), 403-423 (MASA…YAIV), and 435-455 (IALW…LLLV).

It belongs to the major facilitator superfamily. TCR/Tet family.

Its subcellular location is the cell membrane. In terms of biological role, multidrug efflux pump that acts independently of NorA and is one of the factors that confers resistance against diverse quinolones and chemical compounds. Can facilitate bacterial survival in vivo when overexpressed in an abscess and may contribute to the relative resistance of staphylococcal abscesses to antimicrobial therapy. This chain is Quinolone resistance protein NorB (norB), found in Staphylococcus aureus (strain MW2).